Consider the following 229-residue polypeptide: 5'-methylthioadenosine/S-adenosylhomocysteine nucleosidase (229 aa).

Catalysis depends on Glu-12, which acts as the Proton acceptor. Substrate-binding positions include Gly-78, Ile-152, and Met-173 to Glu-174. The Proton donor role is filled by Asp-197.

This sequence belongs to the PNP/UDP phosphorylase family. MtnN subfamily.

It carries out the reaction S-adenosyl-L-homocysteine + H2O = S-(5-deoxy-D-ribos-5-yl)-L-homocysteine + adenine. The enzyme catalyses S-methyl-5'-thioadenosine + H2O = 5-(methylsulfanyl)-D-ribose + adenine. It catalyses the reaction 5'-deoxyadenosine + H2O = 5-deoxy-D-ribose + adenine. It participates in amino-acid biosynthesis; L-methionine biosynthesis via salvage pathway; S-methyl-5-thio-alpha-D-ribose 1-phosphate from S-methyl-5'-thioadenosine (hydrolase route): step 1/2. In terms of biological role, catalyzes the irreversible cleavage of the glycosidic bond in both 5'-methylthioadenosine (MTA) and S-adenosylhomocysteine (SAH/AdoHcy) to adenine and the corresponding thioribose, 5'-methylthioribose and S-ribosylhomocysteine, respectively. Also cleaves 5'-deoxyadenosine, a toxic by-product of radical S-adenosylmethionine (SAM) enzymes, into 5-deoxyribose and adenine. The sequence is that of 5'-methylthioadenosine/S-adenosylhomocysteine nucleosidase from Pasteurella multocida (strain Pm70).